Reading from the N-terminus, the 196-residue chain is Small ribosomal subunit protein uS4c (196 aa).

The segment at 20–39 (GLTRKTPKSGSNLKKKFHSG) is disordered. The S4 RNA-binding domain occupies 89 to 152 (MRLDNILFRL…RSKCLVQNSI (64 aa)).

This sequence belongs to the universal ribosomal protein uS4 family. Part of the 30S ribosomal subunit. Contacts protein S5. The interaction surface between S4 and S5 is involved in control of translational fidelity.

It localises to the plastid. It is found in the chloroplast. In terms of biological role, one of the primary rRNA binding proteins, it binds directly to 16S rRNA where it nucleates assembly of the body of the 30S subunit. With S5 and S12 plays an important role in translational accuracy. The sequence is that of Small ribosomal subunit protein uS4c (rps4) from Dendrocalamus giganteus (Giant bamboo).